We begin with the raw amino-acid sequence, 99 residues long: MTPTYYLLLSALLFSIGAVGVLVRRNAIVVFMCVELMLNAVNLTLVTFARINGSVDGQVMAFFVMVVAAAEVVVGLAIIMSIFRTRRSASVDDANLLKY.

Transmembrane regions (helical) follow at residues 3-23, 28-48, and 59-79; these read PTYY…GVLV, IVVF…LVTF, and VMAF…LAII.

It belongs to the complex I subunit 4L family. NDH-1 is composed of 14 different subunits. Subunits NuoA, H, J, K, L, M, N constitute the membrane sector of the complex.

The protein localises to the cell membrane. The enzyme catalyses a quinone + NADH + 5 H(+)(in) = a quinol + NAD(+) + 4 H(+)(out). Its function is as follows. NDH-1 shuttles electrons from NADH, via FMN and iron-sulfur (Fe-S) centers, to quinones in the respiratory chain. The immediate electron acceptor for the enzyme in this species is believed to be a menaquinone. Couples the redox reaction to proton translocation (for every two electrons transferred, four hydrogen ions are translocated across the cytoplasmic membrane), and thus conserves the redox energy in a proton gradient. The chain is NADH-quinone oxidoreductase subunit K from Saccharopolyspora erythraea (strain ATCC 11635 / DSM 40517 / JCM 4748 / NBRC 13426 / NCIMB 8594 / NRRL 2338).